We begin with the raw amino-acid sequence, 393 residues long: CAI-1 autoinducer synthase (393 aa).

The residue at position 240 (Lys-240) is an N6-(pyridoxal phosphate)lysine.

The protein belongs to the class-II pyridoxal-phosphate-dependent aminotransferase family. It depends on pyridoxal 5'-phosphate as a cofactor.

Functionally, required for the synthesis of the quorum-sensing autoinducer CAI-1 ((S)-3-hydroxytridecan-4-one) which probably functions as an intragenus signal. The sequence is that of CAI-1 autoinducer synthase (cqsA) from Vibrio campbellii (strain ATCC BAA-1116).